Here is a 146-residue protein sequence, read N- to C-terminus: Cytochrome c oxidase assembly factor 1 homolog (146 aa).

Residues 1–14 (MMWQKYAGSRRSMP) are Mitochondrial matrix-facing. Residues 15–37 (LGARILFHGVFYAGGFAIVYYLI) traverse the membrane as a helical segment. Residues 38–146 (QKFHSRALYY…GENGDEVKKE (109 aa)) lie on the Mitochondrial intermembrane side of the membrane.

It belongs to the COA1 family. Component of the MITRAC (mitochondrial translation regulation assembly intermediate of cytochrome c oxidase complex) complex, the core components of this complex being COA3/MITRAC12 and COX14. Interacts with COX17 and COA6. Part of the mitochondrial complex I assembly/MCIA complex that comprises at least the core subunits TMEM126B, NDUFAF1, ECSIT and ACAD9 and complement subunits such as COA1 and TMEM186.

It localises to the mitochondrion inner membrane. In terms of biological role, component of the MITRAC (mitochondrial translation regulation assembly intermediate of cytochrome c oxidase complex) complex, that regulates cytochrome c oxidase assembly. MITRAC complexes regulate both translation of mitochondrial encoded components and assembly of nuclear-encoded components imported in mitochondrion. Required for assembly of mitochondrial respiratory chain complex I and complex IV. As part of the MCIA complex, required for efficient assembly of the mitochondrial complex I. The sequence is that of Cytochrome c oxidase assembly factor 1 homolog from Homo sapiens (Human).